A 311-amino-acid chain; its full sequence is Olfactory receptor 6B1 (311 aa).

At 1–25 the chain is on the extracellular side; it reads MELENQTRVTKFILVGFPGSLSMRA. Asn5 is a glycosylation site (N-linked (GlcNAc...) asparagine). Residues 26-46 form a helical membrane-spanning segment; that stretch reads AMFLIFLVAYILTVAENVIII. At 47 to 54 the chain is on the cytoplasmic side; that stretch reads LLVLQNRP. The helical transmembrane segment at 55–75 threads the bilayer; sequence LHKPMYFFLANLSFLETWYIS. Residues 76 to 99 lie on the Extracellular side of the membrane; the sequence is VTVPKLLFSFWSVNNSISFTLCMI. Cys97 and Cys189 form a disulfide bridge. A helical transmembrane segment spans residues 100-120; the sequence is QLYFFIALMCTECVLLAAMAY. The Cytoplasmic segment spans residues 121-139; the sequence is DRYVAICRPLHYPTIMSHG. Residues 140–160 traverse the membrane as a helical segment; the sequence is LCFRLALGSWAIGFGISLAKI. Over 161 to 196 the chain is Extracellular; it reads YFISCLSFCGPNVINHFFCDISPVLNLSCTDMSITE. A helical membrane pass occupies residues 197 to 217; it reads LVDFILALVIFLFPLFITVLS. Residues 218–235 lie on the Cytoplasmic side of the membrane; the sequence is YGCILATILCMPTGKQKA. A helical transmembrane segment spans residues 236 to 256; that stretch reads FSTCASHLVVVTIFYSAIIFM. At 257 to 269 the chain is on the extracellular side; that stretch reads YARPRVIHAFNMN. Residues 270–290 form a helical membrane-spanning segment; that stretch reads KIISIFYAIVTPSLNPFIYCL. The Cytoplasmic portion of the chain corresponds to 291–311; it reads RNREVKEALKKLAYCQASRSD.

Belongs to the G-protein coupled receptor 1 family.

The protein localises to the cell membrane. In terms of biological role, odorant receptor. The chain is Olfactory receptor 6B1 (OR6B1) from Homo sapiens (Human).